Reading from the N-terminus, the 525-residue chain is GMP synthase [glutamine-hydrolyzing] (525 aa).

Residues 9–207 (RILILDFGSQ…VRDICQCEAL (199 aa)) enclose the Glutamine amidotransferase type-1 domain. C86 (nucleophile) is an active-site residue. Residues H181 and E183 contribute to the active site. The region spanning 208–400 (WTPAKIIDDA…LGLPYDMLYR (193 aa)) is the GMPS ATP-PPase domain. 235–241 (SGGVDSS) contributes to the ATP binding site.

In terms of assembly, homodimer.

The catalysed reaction is XMP + L-glutamine + ATP + H2O = GMP + L-glutamate + AMP + diphosphate + 2 H(+). Its pathway is purine metabolism; GMP biosynthesis; GMP from XMP (L-Gln route): step 1/1. Functionally, catalyzes the synthesis of GMP from XMP. The protein is GMP synthase [glutamine-hydrolyzing] of Salmonella arizonae (strain ATCC BAA-731 / CDC346-86 / RSK2980).